The chain runs to 433 residues: Tol-Pal system protein TolB (433 aa).

The first 21 residues, 1–21 (MRNLLRGMLVVICCMAGIVMA), serve as a signal peptide directing secretion.

Belongs to the TolB family. In terms of assembly, the Tol-Pal system is composed of five core proteins: the inner membrane proteins TolA, TolQ and TolR, the periplasmic protein TolB and the outer membrane protein Pal. They form a network linking the inner and outer membranes and the peptidoglycan layer.

The protein resides in the periplasm. Its function is as follows. Part of the Tol-Pal system, which plays a role in outer membrane invagination during cell division and is important for maintaining outer membrane integrity. The chain is Tol-Pal system protein TolB from Pseudomonas fluorescens (strain Pf0-1).